The chain runs to 659 residues: MVSTDLPPLIELRGIRKRYGGGDKPEVEVLHGIDLDIRAGEFIAIVGSSGSGKSTLMHLLGCLDRPSSGSYRFAGEDVSTFGSDELAWLRRKAFGFVFQGYHLIPTESARENVEIPAIYAGLPPGERMQRAADLLGRLGLSDKLNNRPNQLSGGQQQRVSIARALMNGGHIILADEPTGALDSRSGAEVMELLRELAGAGHTVILITHDRDVAAQAQRVVEIRDGRIVADSVTDRQPSEQPLLHHAGLSSLEMTQAHEDTGTPFWQGLHETIRAAWRVMWIHRVRTSLTLLGIVIGVASVIVMLAIGEGTKQRVIDQMGSMGTTIMYMSSDVPSTGGPVGVITEEDLDEVARLPEISRVMPVIGDPILVRHQNVDKQIYVFSSPYIMPMVHHWRVAQGRFFTETEDRELAPVVVLGHKIYRSFFPHLSNPVGQYLLIGTSPFEVIGVMAERGAESGSQNYDDMVFIPYRAGRARVYQAQEQPDYIVMEAASMDQVQEAEEAIRALLLERHGREDFRIGNAAARLKTQLETRDTMTRMLGLVAAVSLLVGGIGVMNVMLMTVRERTREIGIRMATGAREYDILSQFLIEAMLVTITGGTVGVILGLTVGALLVFWEVPVVFSFGVMIGAFACAVITGLIFGYMPARTAARLDPVVALSSE.

The ABC transporter domain occupies 10–249 (IELRGIRKRY…QPLLHHAGLS (240 aa)). Residue 47–54 (GSSGSGKS) participates in ATP binding. The next 4 helical transmembrane spans lie at 287–307 (SLTLLGIVIGVASVIVMLAIG), 538–558 (LGLVAAVSLLVGGIGVMNVML), 594–614 (ITGGTVGVILGLTVGALLVFW), and 619–639 (VFSFGVMIGAFACAVITGLIF).

It belongs to the ABC transporter superfamily. Macrolide exporter (TC 3.A.1.122) family. Homodimer.

The protein localises to the cell inner membrane. In terms of biological role, non-canonical ABC transporter that contains transmembrane domains (TMD), which form a pore in the inner membrane, and an ATP-binding domain (NBD), which is responsible for energy generation. Confers resistance against macrolides. This Nitrosomonas europaea (strain ATCC 19718 / CIP 103999 / KCTC 2705 / NBRC 14298) protein is Macrolide export ATP-binding/permease protein MacB.